A 482-amino-acid polypeptide reads, in one-letter code: Malvidin galactosylase UGT88C3 (482 aa).

The Proton acceptor role is filled by His-16. Residue Asp-117 is the Charge relay of the active site. Residues Ser-279, Trp-345, Ala-349, His-366, Asn-370, Ser-371, and Glu-374 each contribute to the UDP site.

The protein belongs to the UDP-glycosyltransferase family. As to expression, highly expressed in leaves, sheaths, pistils and embryos, observed in stems, stem nodes and panicles, and present at low levels in roots.

The protein localises to the endoplasmic reticulum. The protein resides in the nucleus. The enzyme catalyses malvidin + UDP-alpha-D-galactose = malvidin 3-O-beta-D-galactoside + UDP + H(+). It participates in pigment biosynthesis; anthocyanin biosynthesis. UDP-glycosyltransferase which uses UDP-galactose and malvidin as substrates to catalyze the biosynthesis of malvidin 3-O-galactoside, an anthocyanin conferring purple pigmentation. The protein is Malvidin galactosylase UGT88C3 of Oryza sativa subsp. japonica (Rice).